Here is a 227-residue protein sequence, read N- to C-terminus: PKHD-type hydroxylase M446_1130 (227 aa).

The 101-residue stretch at 78 to 178 (QIFPPLFNRY…RVASFFWLQS (101 aa)) folds into the Fe2OG dioxygenase domain. Residues H96, D98, and H159 each coordinate Fe cation. R169 is a 2-oxoglutarate binding site.

It depends on Fe(2+) as a cofactor. Requires L-ascorbate as cofactor.

The sequence is that of PKHD-type hydroxylase M446_1130 from Methylobacterium sp. (strain 4-46).